The following is a 156-amino-acid chain: Lipoprotein signal peptidase (156 aa).

3 helical membrane-spanning segments follow: residues 5–25, 64–84, and 89–109; these read FKFI…DQWV, YLHL…KTLL, and IAFG…FIYG. Catalysis depends on residues Asp113 and Asp130. A helical transmembrane segment spans residues 122-142; it reads NFAIFNVADVMINISVALILI.

Belongs to the peptidase A8 family.

Its subcellular location is the cell inner membrane. It carries out the reaction Release of signal peptides from bacterial membrane prolipoproteins. Hydrolyzes -Xaa-Yaa-Zaa-|-(S,diacylglyceryl)Cys-, in which Xaa is hydrophobic (preferably Leu), and Yaa (Ala or Ser) and Zaa (Gly or Ala) have small, neutral side chains.. It functions in the pathway protein modification; lipoprotein biosynthesis (signal peptide cleavage). Functionally, this protein specifically catalyzes the removal of signal peptides from prolipoproteins. The polypeptide is Lipoprotein signal peptidase (Campylobacter jejuni subsp. doylei (strain ATCC BAA-1458 / RM4099 / 269.97)).